Consider the following 207-residue polypeptide: Probable RNA 2'-phosphotransferase (207 aa).

The protein belongs to the KptA/TPT1 family.

Removes the 2'-phosphate from RNA via an intermediate in which the phosphate is ADP-ribosylated by NAD followed by a presumed transesterification to release the RNA and generate ADP-ribose 1''-2''-cyclic phosphate (APPR&gt;P). May function as an ADP-ribosylase. The sequence is that of Probable RNA 2'-phosphotransferase from Methanosarcina acetivorans (strain ATCC 35395 / DSM 2834 / JCM 12185 / C2A).